A 370-amino-acid chain; its full sequence is Protein-glutamate methylesterase/protein-glutamine glutaminase of group 1 operon (370 aa).

Residues 4–121 (KVLVVDDSGF…SRNPDKVKQL (118 aa)) enclose the Response regulatory domain. The residue at position 55 (aspartate 55) is a 4-aspartylphosphate. Over residues 150–180 (PASTFTSQAQTRPAAPARAAAPTPAASQSPA) the composition is skewed to low complexity. The tract at residues 150-183 (PASTFTSQAQTRPAAPARAAAPTPAASQSPAPKR) is disordered. The CheB-type methylesterase domain occupies 179–370 (PAPKRKPYKL…IGKHLVEACV (192 aa)). Catalysis depends on residues serine 194, histidine 221, and aspartate 314.

It belongs to the CheB family. In terms of processing, phosphorylated by CheA. Phosphorylation of the N-terminal regulatory domain activates the methylesterase activity.

Its subcellular location is the cytoplasm. The catalysed reaction is [protein]-L-glutamate 5-O-methyl ester + H2O = L-glutamyl-[protein] + methanol + H(+). The enzyme catalyses L-glutaminyl-[protein] + H2O = L-glutamyl-[protein] + NH4(+). Involved in chemotaxis. Part of a chemotaxis signal transduction system that modulates chemotaxis in response to various stimuli. Catalyzes the demethylation of specific methylglutamate residues introduced into the chemoreceptors (methyl-accepting chemotaxis proteins or MCP) by CheR. Also mediates the irreversible deamidation of specific glutamine residues to glutamic acid. The chain is Protein-glutamate methylesterase/protein-glutamine glutaminase of group 1 operon from Pseudomonas putida (strain ATCC 47054 / DSM 6125 / CFBP 8728 / NCIMB 11950 / KT2440).